Reading from the N-terminus, the 194-residue chain is Peptidyl-tRNA hydrolase (194 aa).

Residue Y17 coordinates tRNA. The active-site Proton acceptor is H22. Positions 68, 70, and 116 each coordinate tRNA.

Belongs to the PTH family. As to quaternary structure, monomer.

Its subcellular location is the cytoplasm. The catalysed reaction is an N-acyl-L-alpha-aminoacyl-tRNA + H2O = an N-acyl-L-amino acid + a tRNA + H(+). Hydrolyzes ribosome-free peptidyl-tRNAs (with 1 or more amino acids incorporated), which drop off the ribosome during protein synthesis, or as a result of ribosome stalling. Its function is as follows. Catalyzes the release of premature peptidyl moieties from peptidyl-tRNA molecules trapped in stalled 50S ribosomal subunits, and thus maintains levels of free tRNAs and 50S ribosomes. The sequence is that of Peptidyl-tRNA hydrolase from Actinobacillus succinogenes (strain ATCC 55618 / DSM 22257 / CCUG 43843 / 130Z).